The sequence spans 706 residues: Elongation factor G 1 (706 aa).

The 283-residue stretch at asparagine 8–threonine 290 folds into the tr-type G domain. GTP-binding positions include alanine 17–threonine 24, aspartate 88–histidine 92, and asparagine 142–aspartate 145.

Belongs to the TRAFAC class translation factor GTPase superfamily. Classic translation factor GTPase family. EF-G/EF-2 subfamily.

It localises to the cytoplasm. In terms of biological role, catalyzes the GTP-dependent ribosomal translocation step during translation elongation. During this step, the ribosome changes from the pre-translocational (PRE) to the post-translocational (POST) state as the newly formed A-site-bound peptidyl-tRNA and P-site-bound deacylated tRNA move to the P and E sites, respectively. Catalyzes the coordinated movement of the two tRNA molecules, the mRNA and conformational changes in the ribosome. This is Elongation factor G 1 from Pseudomonas aeruginosa (strain ATCC 15692 / DSM 22644 / CIP 104116 / JCM 14847 / LMG 12228 / 1C / PRS 101 / PAO1).